The primary structure comprises 559 residues: Potassium-transporting ATPase potassium-binding subunit (559 aa).

12 helical membrane passes run 5–25 (GFLL…PLGM), 63–83 (LLAI…LLML), 131–151 (VGLT…VFAL), 173–193 (ITLW…IQQG), 254–274 (VQML…GEVV), 282–302 (AILW…MWAE), 327–347 (FGIL…CGAV), 356–376 (ALGG…FGGV), 379–399 (GLYG…LMVG), 416–436 (MIAL…ALAM), 483–503 (LLLA…VMAI), and 525–545 (ALFI…TFIP).

The protein belongs to the KdpA family. In terms of assembly, the system is composed of three essential subunits: KdpA, KdpB and KdpC.

The protein resides in the cell inner membrane. Its function is as follows. Part of the high-affinity ATP-driven potassium transport (or Kdp) system, which catalyzes the hydrolysis of ATP coupled with the electrogenic transport of potassium into the cytoplasm. This subunit binds the periplasmic potassium ions and delivers the ions to the membrane domain of KdpB through an intramembrane tunnel. The polypeptide is Potassium-transporting ATPase potassium-binding subunit (Klebsiella pneumoniae subsp. pneumoniae (strain ATCC 700721 / MGH 78578)).